Reading from the N-terminus, the 381-residue chain is Regulatory protein RapF (381 aa).

Mn(2+) is bound by residues Leu40, Met43, and Glu45. TPR repeat units follow at residues Tyr101–Arg137, Ser148–Leu181, Leu182–Glu215, Gly222–Ser255, Pro262–Ala295, and Glu337–Ile370.

Belongs to the Rap family. As to quaternary structure, monomer. Is monomeric either alone or in complex with PhrF. Interacts specifically with the C-terminal DNA-binding domain of ComA. Interacts with PhrF.

It is found in the cytoplasm. Inhibited by PhrF, which prevents RapF-ComA interaction. Interaction with PhrF induces a conformational change in RapF, which is propagated to the ComA binding site and causes the dissociation of ComA from RapF. Functionally, involved in the regulation of genetic competence development. Inhibits the activity of ComA, a transcriptional factor that regulates the development of genetic competence. Acts by binding to ComA, leading to the inhibition of its DNA-binding activity. May also affect transcription independently of ComA. In Bacillus subtilis (strain 168), this protein is Regulatory protein RapF (rapF).